The sequence spans 286 residues: ATP synthase gamma chain (286 aa).

It belongs to the ATPase gamma chain family. In terms of assembly, F-type ATPases have 2 components, CF(1) - the catalytic core - and CF(0) - the membrane proton channel. CF(1) has five subunits: alpha(3), beta(3), gamma(1), delta(1), epsilon(1). CF(0) has three main subunits: a, b and c.

It is found in the cell inner membrane. In terms of biological role, produces ATP from ADP in the presence of a proton gradient across the membrane. The gamma chain is believed to be important in regulating ATPase activity and the flow of protons through the CF(0) complex. This is ATP synthase gamma chain from Shewanella denitrificans (strain OS217 / ATCC BAA-1090 / DSM 15013).